Here is a 284-residue protein sequence, read N- to C-terminus: Bifunctional protein FolD 1 (284 aa).

NADP(+) is bound by residues 166 to 168 (GAS) and I232.

Belongs to the tetrahydrofolate dehydrogenase/cyclohydrolase family. Homodimer.

It catalyses the reaction (6R)-5,10-methylene-5,6,7,8-tetrahydrofolate + NADP(+) = (6R)-5,10-methenyltetrahydrofolate + NADPH. It carries out the reaction (6R)-5,10-methenyltetrahydrofolate + H2O = (6R)-10-formyltetrahydrofolate + H(+). It functions in the pathway one-carbon metabolism; tetrahydrofolate interconversion. Its function is as follows. Catalyzes the oxidation of 5,10-methylenetetrahydrofolate to 5,10-methenyltetrahydrofolate and then the hydrolysis of 5,10-methenyltetrahydrofolate to 10-formyltetrahydrofolate. This chain is Bifunctional protein FolD 1, found in Pseudomonas syringae pv. tomato (strain ATCC BAA-871 / DC3000).